The primary structure comprises 63 residues: Large ribosomal subunit protein bL28 (63 aa).

The protein belongs to the bacterial ribosomal protein bL28 family.

The protein is Large ribosomal subunit protein bL28 of Clostridium kluyveri (strain NBRC 12016).